A 196-amino-acid polypeptide reads, in one-letter code: ATP-dependent Clp protease proteolytic subunit (196 aa).

The Nucleophile role is filled by S101. H126 is a catalytic residue.

The protein belongs to the peptidase S14 family. Component of the chloroplastic Clp protease core complex.

It is found in the plastid. The protein localises to the chloroplast stroma. The catalysed reaction is Hydrolysis of proteins to small peptides in the presence of ATP and magnesium. alpha-casein is the usual test substrate. In the absence of ATP, only oligopeptides shorter than five residues are hydrolyzed (such as succinyl-Leu-Tyr-|-NHMec, and Leu-Tyr-Leu-|-Tyr-Trp, in which cleavage of the -Tyr-|-Leu- and -Tyr-|-Trp bonds also occurs).. Functionally, cleaves peptides in various proteins in a process that requires ATP hydrolysis. Has a chymotrypsin-like activity. Plays a major role in the degradation of misfolded proteins. This Gossypium barbadense (Sea Island cotton) protein is ATP-dependent Clp protease proteolytic subunit.